Here is a 301-residue protein sequence, read N- to C-terminus: Outer membrane porin G (301 aa).

The signal sequence occupies residues 1-21 (MKKLLPCTALVMCAGMACAQA). Transmembrane regions (beta stranded) follow at residues 27 to 35 (WHFNIGAMY), 47 to 57 (MDGLAEPSVYF), 64 to 72 (WRIALAYYQ), 89 to 98 (RPELEVHYQF), 104 to 112 (FSFGLTGGF), 129 to 136 (NMQRWKIA), 149 to 158 (FNGWLSMYKF), 172 to 182 (VETETGLQYTF), 186 to 195 (VALRVNYYLE), 201 to 209 (DDSRNNGEF), 213 to 222 (EIRAYLPLTL), 230 to 238 (YTRIGLDRW), 240 to 248 (NWDWQDDIE), 254 to 265 (FNRVGLFYGYDF), 269 to 279 (LSVSLEYAFEW), and 289 to 300 (KFHYAGVGVNYS).

Monomer.

Its subcellular location is the cell outer membrane. Its function is as follows. Forms channels functionally larger than those of classical porins. Functionally, may act as a regulator of the RCS-phosphorelay signal transduction pathway. This Escherichia coli (strain K12) protein is Outer membrane porin G (ompG).